A 289-amino-acid polypeptide reads, in one-letter code: Ribonuclease H2 subunit A (289 aa).

The RNase H type-2 domain occupies 20-249; it reads PFVMGIDEAG…TETAMRGACF (230 aa). A divalent metal cation-binding residues include aspartate 26, glutamate 27, and aspartate 134.

The protein belongs to the RNase HII family. Eukaryotic subfamily. Mn(2+) is required as a cofactor. It depends on Mg(2+) as a cofactor.

It carries out the reaction Endonucleolytic cleavage to 5'-phosphomonoester.. Its function is as follows. Endonuclease that specifically degrades the RNA of RNA-DNA hybrids. Participates in DNA replication. The sequence is that of Ribonuclease H2 subunit A (rnaseh2A) from Dictyostelium discoideum (Social amoeba).